Reading from the N-terminus, the 151-residue chain is Ribosome maturation factor RimP (151 aa).

This sequence belongs to the RimP family.

Its subcellular location is the cytoplasm. Functionally, required for maturation of 30S ribosomal subunits. The polypeptide is Ribosome maturation factor RimP (Shewanella oneidensis (strain ATCC 700550 / JCM 31522 / CIP 106686 / LMG 19005 / NCIMB 14063 / MR-1)).